Consider the following 202-residue polypeptide: MRTSHLLEQLMEALRCLPGVGPKSAQRMAFNLLQRNRQGGLQLADALNRAMTDIGHCRDCRTFTEDDICAVCANPRRQENGQICVVESPADIVAVESTGQFSGRYFVLMGHLSPLDGIGPSDIGLDTLEFRLQKETIAELILATNPTVEGEATAHYIAELCHEYGVPATRIAHGVPVGGELELVDGTTLSHSLAGRQKLNLY.

Residues 57-72 form a C4-type zinc finger; it reads CRDCRTFTEDDICAVC. In terms of domain architecture, Toprim spans 81 to 176; it reads GQICVVESPA…PATRIAHGVP (96 aa).

The protein belongs to the RecR family.

In terms of biological role, may play a role in DNA repair. It seems to be involved in an RecBC-independent recombinational process of DNA repair. It may act with RecF and RecO. The chain is Recombination protein RecR from Photobacterium profundum (strain SS9).